Here is a 152-residue protein sequence, read N- to C-terminus: Transcriptional repressor NrdR (152 aa).

Residues 3–34 fold into a zinc finger; sequence CPACQHNGTRVLDSRPVDEGRSIRRRRECESC. An ATP-cone domain is found at 49–139; it reads LIVVKKEGIR…VYRQFKDINV (91 aa).

The protein belongs to the NrdR family. The cofactor is Zn(2+).

Functionally, negatively regulates transcription of bacterial ribonucleotide reductase nrd genes and operons by binding to NrdR-boxes. This Bacillus licheniformis (strain ATCC 14580 / DSM 13 / JCM 2505 / CCUG 7422 / NBRC 12200 / NCIMB 9375 / NCTC 10341 / NRRL NRS-1264 / Gibson 46) protein is Transcriptional repressor NrdR.